Reading from the N-terminus, the 292-residue chain is Tumor necrosis factor alpha-induced protein 8-like protein 3 (292 aa).

Positions 81 to 107 (DAQPAARSMDSDSGEQSEGEPVTAAGP) are disordered. A binding to phosphoinositides region spans residues 109–292 (VFSSKSLALQ…INKLLDEKVL (184 aa)).

This sequence belongs to the TNFAIP8 family. As to expression, widely expressed (at protein level). Highly expressed in most carcinoma cell lines.

The protein localises to the cytoplasm. It localises to the cell membrane. Its function is as follows. Acts as a lipid transfer protein. Preferentially captures and shuttles two lipid second messengers, i.e., phosphatidylinositol 4,5- bisphosphate and phosphatidylinositol 3,4,5-trisphosphate and increases their levels in the plasma membrane. Additionally, may also function as a lipid-presenting protein to enhance the activity of the PI3K-AKT and MEK-ERK pathways. May act as a regulator of tumorigenesis through its activation of phospholipid signaling. The polypeptide is Tumor necrosis factor alpha-induced protein 8-like protein 3 (TNFAIP8L3) (Homo sapiens (Human)).